Reading from the N-terminus, the 841-residue chain is Probable alpha-glucuronidase A (841 aa).

The signal sequence occupies residues 1-20 (MRGLNLFQLILALLLSMVAA). Residues asparagine 51, asparagine 76, asparagine 85, asparagine 149, asparagine 222, asparagine 279, asparagine 310, asparagine 343, asparagine 450, asparagine 465, asparagine 527, asparagine 576, asparagine 682, asparagine 723, and asparagine 732 are each glycosylated (N-linked (GlcNAc...) asparagine).

This sequence belongs to the glycosyl hydrolase 67 family.

The protein localises to the secreted. The enzyme catalyses an alpha-D-glucuronoside + H2O = D-glucuronate + an alcohol. Alpha-glucuronidase involved in the hydrolysis of xylan, a major structural heterogeneous polysaccharide found in plant biomass representing the second most abundant polysaccharide in the biosphere, after cellulose. Releases 4-O-methylglucuronic acid from xylan. This Aspergillus niger protein is Probable alpha-glucuronidase A (aguA).